Here is a 150-residue protein sequence, read N- to C-terminus: Auxin-binding protein 5 (150 aa).

The signal sequence occupies residues Met-1–Ser-41. Positions 98, 100, and 104 each coordinate Zn(2+). Asn-136 carries an N-linked (GlcNAc...) asparagine glycan. Residue His-147 coordinates Zn(2+).

In terms of assembly, homodimer.

It is found in the endoplasmic reticulum lumen. Its function is as follows. This is probably a receptor for the plant hormone auxin. The polypeptide is Auxin-binding protein 5 (ABP5) (Zea mays (Maize)).